The following is a 355-amino-acid chain: Putative beta-lactamase HcpE (355 aa).

Positions 1-22 (MNIKILKILVGGLFFLSLNAHL) are cleaved as a signal peptide. 8 TPR repeats span residues 27 to 60 (DNSF…GVSE), 63 to 96 (TQLG…DDRE), 98 to 131 (CFGL…LKHP), 132 to 166 (ESCY…DMAK), 202 to 240 (GQAC…NNSG), 245 to 275 (LGSM…MGSA), 276 to 311 (VSCS…MGDE), and 312 to 344 (VGCF…GMKQ). Intrachain disulfides connect cysteine 54–cysteine 62, cysteine 90–cysteine 98, cysteine 126–cysteine 134, cysteine 160–cysteine 168, cysteine 197–cysteine 205, cysteine 234–cysteine 242, cysteine 270–cysteine 278, cysteine 306–cysteine 314, and cysteine 338–cysteine 346.

It belongs to the hcp beta-lactamase family.

It localises to the secreted. The enzyme catalyses a beta-lactam + H2O = a substituted beta-amino acid. Functionally, may hydrolyze 6-aminopenicillinic acid and 7-aminocephalosporanic acid (ACA) derivatives. The chain is Putative beta-lactamase HcpE (hcpE) from Helicobacter pylori (strain J99 / ATCC 700824) (Campylobacter pylori J99).